Reading from the N-terminus, the 167-residue chain is MLCGPLCRFLWLWPYLSYVEAVPIRKVQDDTKTLIKTIVTRINDISHTQSVSSKQRVAGLDFIPGLHPVLSLSKMDQTLAIYQQILTGLPSRNVVQISNDLENLRDLLHLLASSKNCPLPRARGLETLESLGGALEASLYSTEVVALSRLQASLQDMLWRLDLSPGC.

The signal sequence occupies residues 1–21; that stretch reads MLCGPLCRFLWLWPYLSYVEA. A disulfide bridge connects residues Cys-117 and Cys-167.

Belongs to the leptin family.

It is found in the secreted. In terms of biological role, key player in the regulation of energy balance and body weight control. Once released into the circulation, has central and peripheral effects by binding LEPR, found in many tissues, which results in the activation of several major signaling pathways. In the hypothalamus, acts as an appetite-regulating factor that induces a decrease in food intake and an increase in energy consumption by inducing anorexinogenic factors and suppressing orexigenic neuropeptides, also regulates bone mass and secretion of hypothalamo-pituitary-adrenal hormones. In the periphery, increases basal metabolism, influences reproductive function, regulates pancreatic beta-cell function and insulin secretion, is pro-angiogenic for endothelial cell and affects innate and adaptive immunity. In the arcuate nucleus of the hypothalamus, activates by depolarization POMC neurons inducing FOS and SOCS3 expression to release anorexigenic peptides and inhibits by hyperpolarization NPY neurons inducing SOCS3 with a consequent reduction on release of orexigenic peptides. In addition to its known satiety inducing effect, has a modulatory role in nutrient absorption. In the intestine, reduces glucose absorption by enterocytes by activating PKC and leading to a sequential activation of p38, PI3K and ERK signaling pathways which exerts an inhibitory effect on glucose absorption. Acts as a growth factor on certain tissues, through the activation of different signaling pathways increases expression of genes involved in cell cycle regulation such as CCND1, via JAK2-STAT3 pathway, or VEGFA, via MAPK1/3 and PI3K-AKT1 pathways. May also play an apoptotic role via JAK2-STAT3 pathway and up-regulation of BIRC5 expression. Pro-angiogenic, has mitogenic activity on vascular endothelial cells and plays a role in matrix remodeling by regulating the expression of matrix metalloproteinases (MMPs) and tissue inhibitors of metalloproteinases (TIMPs). In innate immunity, modulates the activity and function of neutrophils by increasing chemotaxis and the secretion of oxygen radicals. Increases phagocytosis by macrophages and enhances secretion of pro-inflammatory mediators. Increases cytotoxic ability of NK cells. Plays a pro-inflammatory role, in synergy with IL1B, by inducing NOS2 which promotes the production of IL6, IL8 and Prostaglandin E2, through a signaling pathway that involves JAK2, PI3K, MAP2K1/MEK1 and MAPK14/p38. In adaptive immunity, promotes the switch of memory T-cells towards T helper-1 cell immune responses. Increases CD4(+)CD25(-) T-cell proliferation and reduces autophagy during TCR (T-cell receptor) stimulation, through MTOR signaling pathway activation and BCL2 up-regulation. The polypeptide is Leptin (LEP) (Felis catus (Cat)).